The primary structure comprises 147 residues: Large ribosomal subunit protein bL9 (147 aa).

The protein belongs to the bacterial ribosomal protein bL9 family.

Functionally, binds to the 23S rRNA. The sequence is that of Large ribosomal subunit protein bL9 from Clostridium botulinum (strain Alaska E43 / Type E3).